Reading from the N-terminus, the 153-residue chain is Aspartate carbamoyltransferase regulatory chain (153 aa).

Positions 109, 114, 138, and 141 each coordinate Zn(2+).

It belongs to the PyrI family. As to quaternary structure, contains catalytic and regulatory chains. It depends on Zn(2+) as a cofactor.

In terms of biological role, involved in allosteric regulation of aspartate carbamoyltransferase. The sequence is that of Aspartate carbamoyltransferase regulatory chain from Edwardsiella ictaluri (strain 93-146).